Reading from the N-terminus, the 1203-residue chain is DNA-directed RNA polymerase subunit beta' (1203 aa).

Cys-60, Cys-62, Cys-75, and Cys-78 together coordinate Zn(2+). The Mg(2+) site is built by Asp-449, Asp-451, and Asp-453. Zn(2+)-binding residues include Cys-818, Cys-892, Cys-899, and Cys-902.

Belongs to the RNA polymerase beta' chain family. In terms of assembly, the RNAP catalytic core consists of 2 alpha, 1 beta, 1 beta' and 1 omega subunit. When a sigma factor is associated with the core the holoenzyme is formed, which can initiate transcription. The cofactor is Mg(2+). It depends on Zn(2+) as a cofactor.

It carries out the reaction RNA(n) + a ribonucleoside 5'-triphosphate = RNA(n+1) + diphosphate. In terms of biological role, DNA-dependent RNA polymerase catalyzes the transcription of DNA into RNA using the four ribonucleoside triphosphates as substrates. The sequence is that of DNA-directed RNA polymerase subunit beta' from Bacillus anthracis.